The primary structure comprises 652 residues: Maternal embryonic leucine zipper kinase (652 aa).

The Protein kinase domain occupies tyrosine 13–leucine 265. Residues isoleucine 19–valine 27 and lysine 42 each bind ATP. Aspartate 134 serves as the catalytic Proton acceptor. Threonine 169 is subject to Phosphothreonine; by autocatalysis. Position 173 is a phosphoserine; by autocatalysis (serine 173). The tract at residues valine 284–histidine 323 is UBA-like. Residues histidine 328 to valine 652 are autoinhibitory region. 5 positions are modified to phosphothreonine: threonine 415, threonine 450, threonine 452, threonine 482, and threonine 484. A disordered region spans residues phenylalanine 443–glutamate 492. Positions histidine 472–threonine 484 are enriched in basic and acidic residues. A phosphoserine mark is found at serine 499, serine 506, and serine 518. In terms of domain architecture, KA1 spans serine 603 to valine 652.

Belongs to the protein kinase superfamily. CAMK Ser/Thr protein kinase family. SNF1 subfamily. Autophosphorylated: autophosphorylation of the T-loop at Thr-169 and Ser-173 is required for activation. Phosphorylated by the maturation promoting factor (MPF), composed of cdk1 and a cyclin-B. Also phosphorylated by some MAPK. Phosphorylated during oocyte maturation. Dephosphorylation destabilizes the protein. Post-translationally, degraded when cells exit mitosis.

It is found in the cell membrane. The enzyme catalyses L-seryl-[protein] + ATP = O-phospho-L-seryl-[protein] + ADP + H(+). The catalysed reaction is L-threonyl-[protein] + ATP = O-phospho-L-threonyl-[protein] + ADP + H(+). Activated by autophosphorylation of the T-loop at Thr-169 and Ser-173: in contrast to other members of the SNF1 subfamily, phosphorylation at Thr-169 is not mediated by STK11/LKB1 but via autophosphorylation instead. Functionally, serine/threonine-protein kinase involved in various processes such as cell cycle regulation, self-renewal of stem cells, apoptosis and splicing regulation. Also plays a role in primitive hematopoiesis, possibly by affecting the expression of genes critical for hematopoiesis. Plays a role in cytokinesis during early development. This Xenopus tropicalis (Western clawed frog) protein is Maternal embryonic leucine zipper kinase (melk).